Here is a 720-residue protein sequence, read N- to C-terminus: ATP-dependent RNA helicase glh-3 (720 aa).

Over residues 1–11 (MDKSPTKTSIR) the composition is skewed to polar residues. Disordered regions lie at residues 1-34 (MDKS…SCIK) and 125-180 (LNSR…SYGN). 2 stretches are compositionally biased toward basic and acidic residues: residues 141 to 154 (NVKE…RSDD) and 162 to 172 (SAKDEERDRDS). 2 consecutive CCHC-type zinc fingers follow at residues 202–219 (NTCF…ECSA) and 222–239 (RECA…ECAS). The Q motif motif lies at 298–326 (KSFSDSDIPQSMRRNVERAGYTRTTPIQQ). The Helicase ATP-binding domain maps to 329 to 513 (LPLVADGKDI…RKLLREDYTM (185 aa)). 342 to 349 (AQTGSGKT) contacts ATP. The short motif at 456–459 (DEAD) is the DEAD box element. Residues 549–698 (DIDTYTTEKN…VVPSWMKEAA (150 aa)) enclose the Helicase C-terminal domain. The disordered stretch occupies residues 696-720 (EAAGGTSNPNKFEKSIDTEEPEEAW).

Belongs to the DEAD box helicase family. DDX4/VASA subfamily. Interacts with csn-5. Interacts (via C-terminus) with kgb-1. Interacts with zyx-1.

The protein resides in the cytoplasm. The enzyme catalyses ATP + H2O = ADP + phosphate + H(+). Probable ATP-binding RNA helicase. The sequence is that of ATP-dependent RNA helicase glh-3 from Caenorhabditis elegans.